The following is a 321-amino-acid chain: tRNA U34 carboxymethyltransferase (321 aa).

Carboxy-S-adenosyl-L-methionine-binding positions include lysine 90, tryptophan 104, lysine 109, glycine 129, 151–153 (DPT), 180–181 (IE), methionine 195, tyrosine 199, and arginine 314.

The protein belongs to the class I-like SAM-binding methyltransferase superfamily. CmoB family. Homotetramer.

It catalyses the reaction carboxy-S-adenosyl-L-methionine + 5-hydroxyuridine(34) in tRNA = 5-carboxymethoxyuridine(34) in tRNA + S-adenosyl-L-homocysteine + H(+). Its function is as follows. Catalyzes carboxymethyl transfer from carboxy-S-adenosyl-L-methionine (Cx-SAM) to 5-hydroxyuridine (ho5U) to form 5-carboxymethoxyuridine (cmo5U) at position 34 in tRNAs. The polypeptide is tRNA U34 carboxymethyltransferase (Haemophilus influenzae (strain 86-028NP)).